The primary structure comprises 1238 residues: Cryptic loci regulator protein 1 (1238 aa).

6 disordered regions span residues 133–156, 196–237, 277–303, 546–568, 696–735, and 784–824; these read TQQQVSNVSHGNFKPNSSVNTEPN, PFSN…PSSI, ASLYDRSPSKKDITSSRNTSSYNLGSM, QKSVSSETTLVKPSSTSSYIDTT, SDNTDCSLPKPSNSKLSSISSDGDASSNRMAVPDKSPFVH, and TLKE…QSRS. Over residues 214–223 the composition is skewed to polar residues; the sequence is NVKNNSKKTA. Low complexity predominate over residues 224-237; the sequence is SSVNSNHSSIPSSI. Positions 291–303 are enriched in polar residues; sequence SSRNTSSYNLGSM. Positions 702–723 are enriched in low complexity; that stretch reads SLPKPSNSKLSSISSDGDASSN. Over residues 785–796 the composition is skewed to basic and acidic residues; it reads LKEDASSTKQAK. Positions 810–819 are enriched in polar residues; it reads NDVSKNNSGE. A C2H2-type zinc finger spans residues 1062–1087; that stretch reads LNCEVSNCKKCFSNYEDMFKHLQHSH.

Interacts with clr3.

The protein localises to the nucleus. The protein resides in the chromosome. Its subcellular location is the centromere. It is found in the telomere. Its function is as follows. Regulates silencing of the mat2 and mat3 loci. Organizes the chromatin structure of the mating-type region where it also participates in establishing the 'cold spot' for recombination. Required for proper positioning of nucleosomes at heterochromatic loci and for transcriptional gene silencing (TGS) function of the Snf2/Hdac-containing repressor complex (SHREC). The sequence is that of Cryptic loci regulator protein 1 (clr1) from Schizosaccharomyces pombe (strain 972 / ATCC 24843) (Fission yeast).